We begin with the raw amino-acid sequence, 472 residues long: Chromosomal replication initiator protein DnaA (472 aa).

A domain I, interacts with DnaA modulators region spans residues 1–73 (MSNMEHDRWS…LTCWQAELPE (73 aa)). The domain II stretch occupies residues 73–128 (EVCRIDLTVRSPMRAAVAKEAAAPVEHRRAEHRPATETRSHATVPASSNHDALGGS). Positions 92–127 (EAAAPVEHRRAEHRPATETRSHATVPASSNHDALGG) are disordered. Residues 97–112 (VEHRRAEHRPATETRS) show a composition bias toward basic and acidic residues. The domain III, AAA+ region stretch occupies residues 129 to 351 (PLDPRLTFAS…GAINRLLAHS (223 aa)). Residues G176, G178, K179, and T180 each coordinate ATP. The domain IV, binds dsDNA stretch occupies residues 352-472 (KLNAQPVTLE…VDSLKRQLQE (121 aa)).

It belongs to the DnaA family. As to quaternary structure, oligomerizes as a right-handed, spiral filament on DNA at oriC.

It localises to the cytoplasm. Functionally, plays an essential role in the initiation and regulation of chromosomal replication. ATP-DnaA binds to the origin of replication (oriC) to initiate formation of the DNA replication initiation complex once per cell cycle. Binds the DnaA box (a 9 base pair repeat at the origin) and separates the double-stranded (ds)DNA. Forms a right-handed helical filament on oriC DNA; dsDNA binds to the exterior of the filament while single-stranded (ss)DNA is stabiized in the filament's interior. The ATP-DnaA-oriC complex binds and stabilizes one strand of the AT-rich DNA unwinding element (DUE), permitting loading of DNA polymerase. After initiation quickly degrades to an ADP-DnaA complex that is not apt for DNA replication. Binds acidic phospholipids. This is Chromosomal replication initiator protein DnaA from Rhodopseudomonas palustris (strain HaA2).